The primary structure comprises 308 residues: Porphobilinogen deaminase (308 aa).

Cys241 carries the S-(dipyrrolylmethanemethyl)cysteine modification.

This sequence belongs to the HMBS family. As to quaternary structure, monomer. Dipyrromethane serves as cofactor.

It carries out the reaction 4 porphobilinogen + H2O = hydroxymethylbilane + 4 NH4(+). It functions in the pathway porphyrin-containing compound metabolism; protoporphyrin-IX biosynthesis; coproporphyrinogen-III from 5-aminolevulinate: step 2/4. Tetrapolymerization of the monopyrrole PBG into the hydroxymethylbilane pre-uroporphyrinogen in several discrete steps. The polypeptide is Porphobilinogen deaminase (Staphylococcus aureus (strain MSSA476)).